The following is a 444-amino-acid chain: Phosphoglucosamine mutase (444 aa).

The active-site Phosphoserine intermediate is S104. Residues S104, D243, D245, and D247 each coordinate Mg(2+). Phosphoserine is present on S104.

This sequence belongs to the phosphohexose mutase family. Requires Mg(2+) as cofactor. Activated by phosphorylation.

It carries out the reaction alpha-D-glucosamine 1-phosphate = D-glucosamine 6-phosphate. Its function is as follows. Catalyzes the conversion of glucosamine-6-phosphate to glucosamine-1-phosphate. In Neisseria meningitidis serogroup B (strain ATCC BAA-335 / MC58), this protein is Phosphoglucosamine mutase.